The following is a 284-amino-acid chain: Shikimate kinase (284 aa).

ATP is bound at residue P85–A95.

This sequence belongs to the GHMP kinase family. Archaeal shikimate kinase subfamily.

The protein resides in the cytoplasm. The catalysed reaction is shikimate + ATP = 3-phosphoshikimate + ADP + H(+). It functions in the pathway metabolic intermediate biosynthesis; chorismate biosynthesis; chorismate from D-erythrose 4-phosphate and phosphoenolpyruvate: step 5/7. This Halobacterium salinarum (strain ATCC 29341 / DSM 671 / R1) protein is Shikimate kinase.